Consider the following 229-residue polypeptide: MSAPAEVFSLLKQCADGNVLLSLSSPEGAAYTTTVWALDPARGLLCLSADGGDIKLQRLLESEEVVAVGYLDSVKLQFDLHDLVLVHSGRASALNARFPRELYRFQRRGSYRVRPLLNTSPTATLRHPALPDMQLSLRVLDVSIGGVALFLPDDVPPIEPGVQIAQVQVDLDGDTRLQSGLIVHHVTLLHHESRGARLGCEMLNLGGDGERALQRYIDQTQKRRRLLSL.

The PilZ domain occupies 134–218; the sequence is QLSLRVLDVS…GERALQRYID (85 aa).

Belongs to the YcgR family. As to quaternary structure, monomer. Interacts with the flagellar basal bodies.

The protein resides in the bacterial flagellum basal body. In terms of biological role, acts as a flagellar brake, regulating swimming and swarming in a bis-(3'-5') cyclic diguanylic acid (c-di-GMP)-dependent manner. Binds 1 c-di-GMP dimer per subunit. Increasing levels of c-di-GMP lead to decreased motility. The chain is Flagellar brake protein YcgR from Methylibium petroleiphilum (strain ATCC BAA-1232 / LMG 22953 / PM1).